Here is a 101-residue protein sequence, read N- to C-terminus: ATP-dependent Clp protease adapter protein ClpS (101 aa).

It belongs to the ClpS family. Binds to the N-terminal domain of the chaperone ClpA.

Involved in the modulation of the specificity of the ClpAP-mediated ATP-dependent protein degradation. This Clostridium acetobutylicum (strain ATCC 824 / DSM 792 / JCM 1419 / IAM 19013 / LMG 5710 / NBRC 13948 / NRRL B-527 / VKM B-1787 / 2291 / W) protein is ATP-dependent Clp protease adapter protein ClpS.